Consider the following 283-residue polypeptide: 4-hydroxy-3-methylbut-2-enyl diphosphate reductase (283 aa).

Cys12 serves as a coordination point for [4Fe-4S] cluster. (2E)-4-hydroxy-3-methylbut-2-enyl diphosphate-binding residues include His40 and His72. Dimethylallyl diphosphate is bound by residues His40 and His72. His40 and His72 together coordinate isopentenyl diphosphate. Cys94 contacts [4Fe-4S] cluster. (2E)-4-hydroxy-3-methylbut-2-enyl diphosphate is bound at residue His122. His122 is a binding site for dimethylallyl diphosphate. His122 is a binding site for isopentenyl diphosphate. Glu124 serves as the catalytic Proton donor. Residue Thr160 participates in (2E)-4-hydroxy-3-methylbut-2-enyl diphosphate binding. Cys188 serves as a coordination point for [4Fe-4S] cluster. (2E)-4-hydroxy-3-methylbut-2-enyl diphosphate contacts are provided by Ser216, Asn218, and Ser259. The dimethylallyl diphosphate site is built by Ser216, Asn218, and Ser259. Positions 216, 218, and 259 each coordinate isopentenyl diphosphate.

The protein belongs to the IspH family. [4Fe-4S] cluster serves as cofactor.

It catalyses the reaction isopentenyl diphosphate + 2 oxidized [2Fe-2S]-[ferredoxin] + H2O = (2E)-4-hydroxy-3-methylbut-2-enyl diphosphate + 2 reduced [2Fe-2S]-[ferredoxin] + 2 H(+). The enzyme catalyses dimethylallyl diphosphate + 2 oxidized [2Fe-2S]-[ferredoxin] + H2O = (2E)-4-hydroxy-3-methylbut-2-enyl diphosphate + 2 reduced [2Fe-2S]-[ferredoxin] + 2 H(+). It functions in the pathway isoprenoid biosynthesis; dimethylallyl diphosphate biosynthesis; dimethylallyl diphosphate from (2E)-4-hydroxy-3-methylbutenyl diphosphate: step 1/1. Its pathway is isoprenoid biosynthesis; isopentenyl diphosphate biosynthesis via DXP pathway; isopentenyl diphosphate from 1-deoxy-D-xylulose 5-phosphate: step 6/6. Functionally, catalyzes the conversion of 1-hydroxy-2-methyl-2-(E)-butenyl 4-diphosphate (HMBPP) into a mixture of isopentenyl diphosphate (IPP) and dimethylallyl diphosphate (DMAPP). Acts in the terminal step of the DOXP/MEP pathway for isoprenoid precursor biosynthesis. This is 4-hydroxy-3-methylbut-2-enyl diphosphate reductase from Dictyoglomus thermophilum (strain ATCC 35947 / DSM 3960 / H-6-12).